Reading from the N-terminus, the 185-residue chain is Large ribosomal subunit protein uL5 (185 aa).

Belongs to the universal ribosomal protein uL5 family. As to quaternary structure, part of the 50S ribosomal subunit; part of the 5S rRNA/L5/L18/L25 subcomplex. Contacts the 5S rRNA and the P site tRNA. Forms a bridge to the 30S subunit in the 70S ribosome.

Its function is as follows. This is one of the proteins that bind and probably mediate the attachment of the 5S RNA into the large ribosomal subunit, where it forms part of the central protuberance. In the 70S ribosome it contacts protein S13 of the 30S subunit (bridge B1b), connecting the 2 subunits; this bridge is implicated in subunit movement. Contacts the P site tRNA; the 5S rRNA and some of its associated proteins might help stabilize positioning of ribosome-bound tRNAs. The chain is Large ribosomal subunit protein uL5 from Rhizobium etli (strain ATCC 51251 / DSM 11541 / JCM 21823 / NBRC 15573 / CFN 42).